Here is a 496-residue protein sequence, read N- to C-terminus: Lysine--tRNA ligase (496 aa).

Mg(2+) is bound by residues Glu409 and Glu416.

Belongs to the class-II aminoacyl-tRNA synthetase family. As to quaternary structure, homodimer. Mg(2+) serves as cofactor.

The protein localises to the cytoplasm. The catalysed reaction is tRNA(Lys) + L-lysine + ATP = L-lysyl-tRNA(Lys) + AMP + diphosphate. The polypeptide is Lysine--tRNA ligase (Streptococcus thermophilus (strain ATCC BAA-491 / LMD-9)).